The primary structure comprises 348 residues: Secreted frizzled-related protein 4 (348 aa).

The first 18 residues, 1–18 (MLLSILVALCLCVRLALG), serve as a signal peptide directing secretion. The FZ domain maps to 19 to 139 (VRGAPCEAVR…VYDRGVCISP (121 aa)). Intrachain disulfides connect C24/C85, C32/C78, C69/C108, C97/C136, and C101/C125. N-linked (GlcNAc...) asparagine glycans are attached at residues N38 and N68. N116, N194, and N240 each carry an N-linked (GlcNAc...) asparagine glycan. The region spanning 178–296 (CKCKKVKPTL…WEERLQEQQR (119 aa)) is the NTR domain. Over residues 289 to 303 (ERLQEQQRTTQDKKQ) the composition is skewed to basic and acidic residues. Positions 289 to 348 (ERLQEQQRTTQDKKQIASRTSRSNPPKPKGRSPASKPASPKKNIKARSAPKKSNPKKSTS) are disordered. Over residues 330-348 (KNIKARSAPKKSNPKKSTS) the composition is skewed to basic residues.

Belongs to the secreted frizzled-related protein (sFRP) family. Expressed in the involuting mammary gland, ovarian corpus luteum and prostate. In ovaries, low levels found in granulosa cells. High levels in corpora lutea of pregnant animals.

It is found in the secreted. In terms of biological role, soluble frizzled-related proteins (sFRPS) function as modulators of Wnt signaling through direct interaction with Wnts. They have a role in regulating cell growth and differentiation in specific cell types. SFRP4 plays a role in bone morphogenesis. May also act as a regulator of adult uterine morphology and function. May also increase apoptosis during ovulation possibly through modulation of FZ1/FZ4/WNT4 signaling. Has phosphaturic effects by specifically inhibiting sodium-dependent phosphate uptake. This is Secreted frizzled-related protein 4 (Sfrp4) from Rattus norvegicus (Rat).